Here is a 380-residue protein sequence, read N- to C-terminus: uncharacterized protein (380 aa).

Positions 111–369 (APYSMERHHD…DCLAILAEMI (259 aa)) constitute a Peptidase M14 domain. Residues histidine 164, glutamate 167, and histidine 257 each coordinate Zn(2+). The Proton donor/acceptor role is filled by glutamate 333.

Requires Zn(2+) as cofactor.

This is an uncharacterized protein from Zymomonas mobilis subsp. mobilis (strain ATCC 31821 / ZM4 / CP4).